Consider the following 229-residue polypeptide: Large ribosomal subunit protein uL1 (229 aa).

Belongs to the universal ribosomal protein uL1 family. Part of the 50S ribosomal subunit.

Functionally, binds directly to 23S rRNA. The L1 stalk is quite mobile in the ribosome, and is involved in E site tRNA release. In terms of biological role, protein L1 is also a translational repressor protein, it controls the translation of the L11 operon by binding to its mRNA. The chain is Large ribosomal subunit protein uL1 from Streptococcus equi subsp. equi (strain 4047).